We begin with the raw amino-acid sequence, 497 residues long: MNKICLKYLLLPWIKNIPKKYISNLKMDSRTLTPGDLFIAVPGIKKDGRHFIVQAINKKAAAILCETKKKDKHGIFKYIKNVILIYFFKLSENVSLLANRFYKEPGKRLKIIGITGTNGKTTVTQLINQWSTILGTKTATMGTLGNGFYNSLQPTNNTTSSPIFIQLFLSKVLEKQAELVTMEVSSHGLIQHRVKEVPFYIAIFTNLTQDHLDYHENLEKYESAKWLLFSTHKVKKIILNADDQYGKIWLKKLLNFYTVAVTIQNRKQKKYSTKWINATNIEQNNNSIYITFESSWGTGRISSCLIGRFNVTNLLLSLACLLELGYSLSDLIHTSEKIIPVQGRMELFSYVKKPTFIIDYAHTPDALKKTLNAIHSHYQRYIWCIFGCGGERDQKKRPIMGAIAEKMSDKVIITNDNPRNEKEKKIIQDILNGCKNKEKILIIPDRKKAISYAYFGAKYHHIILIAGKGHEEKQIIQNRSINYSDKKIVLNLLGKNI.

Ser29 contributes to the UDP-N-acetyl-alpha-D-muramoyl-L-alanyl-D-glutamate binding site. 116-122 contributes to the ATP binding site; sequence GTNGKTT. UDP-N-acetyl-alpha-D-muramoyl-L-alanyl-D-glutamate contacts are provided by residues Asn157, 158-159, Ser185, Gln191, and Arg193; that span reads TT. Lys225 carries the post-translational modification N6-carboxylysine. Meso-2,6-diaminopimelate-binding positions include Arg392, 416 to 419, Gly467, and Glu471; that span reads DNPR. The Meso-diaminopimelate recognition motif signature appears at 416 to 419; it reads DNPR.

This sequence belongs to the MurCDEF family. MurE subfamily. Mg(2+) is required as a cofactor. In terms of processing, carboxylation is probably crucial for Mg(2+) binding and, consequently, for the gamma-phosphate positioning of ATP.

The protein resides in the cytoplasm. It carries out the reaction UDP-N-acetyl-alpha-D-muramoyl-L-alanyl-D-glutamate + meso-2,6-diaminopimelate + ATP = UDP-N-acetyl-alpha-D-muramoyl-L-alanyl-gamma-D-glutamyl-meso-2,6-diaminopimelate + ADP + phosphate + H(+). Its pathway is cell wall biogenesis; peptidoglycan biosynthesis. Functionally, catalyzes the addition of meso-diaminopimelic acid to the nucleotide precursor UDP-N-acetylmuramoyl-L-alanyl-D-glutamate (UMAG) in the biosynthesis of bacterial cell-wall peptidoglycan. In Buchnera aphidicola subsp. Acyrthosiphon pisum (strain APS) (Acyrthosiphon pisum symbiotic bacterium), this protein is UDP-N-acetylmuramoyl-L-alanyl-D-glutamate--2,6-diaminopimelate ligase.